The following is a 359-amino-acid chain: 3-dehydroquinate synthase (359 aa).

NAD(+) is bound by residues 70 to 75 (DGEQYK), 105 to 109 (GVIGD), 129 to 130 (TT), Lys142, Lys151, and 169 to 172 (FYKT). Residues Glu184, His247, and His264 each coordinate Zn(2+).

It belongs to the sugar phosphate cyclases superfamily. Dehydroquinate synthase family. Co(2+) is required as a cofactor. It depends on Zn(2+) as a cofactor. The cofactor is NAD(+).

Its subcellular location is the cytoplasm. The catalysed reaction is 7-phospho-2-dehydro-3-deoxy-D-arabino-heptonate = 3-dehydroquinate + phosphate. The protein operates within metabolic intermediate biosynthesis; chorismate biosynthesis; chorismate from D-erythrose 4-phosphate and phosphoenolpyruvate: step 2/7. Its function is as follows. Catalyzes the conversion of 3-deoxy-D-arabino-heptulosonate 7-phosphate (DAHP) to dehydroquinate (DHQ). The polypeptide is 3-dehydroquinate synthase (Francisella tularensis subsp. tularensis (strain WY96-3418)).